The primary structure comprises 529 residues: MASDNLVVLNALDTARTQWYHVTAVIIAGMGFFTDAYDLFCISTVSKLLGRLYYYDPSTKAPGKLPHMANNWVIGVALVGTLSGQLVFGWLGDKLGRKKVYGLTLILMVICALCSGLSLGYSPKSVIGTLCFFRFWLGFGIGGDYPLSATIMSEYANKSTRGAFIAAVFAMQGVGIIFAGLVSMTISKVFLMNFEGKPFNVDEVLSTEPEADYVWRIVLMLGALPALLTYYWRMKMPETGRYTAIIEGNAKQAAIDMGKVLDIEIQAEGDKLAQFKAANEYSLLSNEFFQRHGLHLIGTMSTWFLLDIAFYSQNLTQKDIFPVMGLTSKANTISALREMFETSRAMFVIALFGTFPGYWFTVFFIEKIGRFKIQLVGFFMMSVFMAIIGVKYDYLRNKEHKWTFAALYGLTFFFANFGPNSTTFVLPAELFPTRVRSTCHALSAALGKAGAMISAFGIQQYTQDQDVRKIKTAMLLLAFTNMVGFCCTFLVTETKGRSLEEISGEDGRQNETQMKTTRPVSGHPDDGWE.

At 1–21 the chain is on the cytoplasmic side; sequence MASDNLVVLNALDTARTQWYH. Residues 22 to 42 form a helical membrane-spanning segment; that stretch reads VTAVIIAGMGFFTDAYDLFCI. The Extracellular portion of the chain corresponds to 43–71; sequence STVSKLLGRLYYYDPSTKAPGKLPHMANN. Residues 72–92 form a helical membrane-spanning segment; that stretch reads WVIGVALVGTLSGQLVFGWLG. Residues 93–99 are Cytoplasmic-facing; it reads DKLGRKK. Residues 100–120 traverse the membrane as a helical segment; sequence VYGLTLILMVICALCSGLSLG. Residues 121–125 lie on the Extracellular side of the membrane; it reads YSPKS. A helical transmembrane segment spans residues 126-146; it reads VIGTLCFFRFWLGFGIGGDYP. At 147–161 the chain is on the cytoplasmic side; sequence LSATIMSEYANKSTR. Residues 162–182 form a helical membrane-spanning segment; sequence GAFIAAVFAMQGVGIIFAGLV. The Extracellular portion of the chain corresponds to 183 to 211; that stretch reads SMTISKVFLMNFEGKPFNVDEVLSTEPEA. A helical membrane pass occupies residues 212 to 232; it reads DYVWRIVLMLGALPALLTYYW. The Cytoplasmic portion of the chain corresponds to 233 to 291; that stretch reads RMKMPETGRYTAIIEGNAKQAAIDMGKVLDIEIQAEGDKLAQFKAANEYSLLSNEFFQR. A helical membrane pass occupies residues 292-312; it reads HGLHLIGTMSTWFLLDIAFYS. The Extracellular portion of the chain corresponds to 313–344; it reads QNLTQKDIFPVMGLTSKANTISALREMFETSR. The N-linked (GlcNAc...) asparagine glycan is linked to Asn-314. The helical transmembrane segment at 345-365 threads the bilayer; that stretch reads AMFVIALFGTFPGYWFTVFFI. At 366–374 the chain is on the cytoplasmic side; that stretch reads EKIGRFKIQ. A helical transmembrane segment spans residues 375 to 395; it reads LVGFFMMSVFMAIIGVKYDYL. At 396–405 the chain is on the extracellular side; the sequence is RNKEHKWTFA. The chain crosses the membrane as a helical span at residues 406–426; that stretch reads ALYGLTFFFANFGPNSTTFVL. Residues 427–437 are Cytoplasmic-facing; that stretch reads PAELFPTRVRS. The chain crosses the membrane as a helical span at residues 438 to 458; the sequence is TCHALSAALGKAGAMISAFGI. Topologically, residues 459-471 are extracellular; the sequence is QQYTQDQDVRKIK. A helical membrane pass occupies residues 472-492; sequence TAMLLLAFTNMVGFCCTFLVT. Over 493–529 the chain is Cytoplasmic; sequence ETKGRSLEEISGEDGRQNETQMKTTRPVSGHPDDGWE. Residues 501-529 are disordered; sequence EISGEDGRQNETQMKTTRPVSGHPDDGWE. Residues 510–519 show a composition bias toward polar residues; the sequence is NETQMKTTRP.

It belongs to the major facilitator superfamily. Phosphate:H(+) symporter (TC 2.A.1.9) family.

The protein localises to the cell membrane. It catalyses the reaction phosphate(in) + H(+)(in) = phosphate(out) + H(+)(out). Functionally, low-affinity transporter for external inorganic phosphate (Pi) probably involved in the acquisition of phosphate released by arbuscular mycorrhizal (AM) fungi (e.g. Rhizophagus irregularis and Glomus intraradices) during AM symbiosis. Acts as a Pi-sensing machinery at the root tip level, independently of AM fungi, involved in the regulation of early root branching and lateral roots formation. The chain is Low affinity inorganic phosphate transporter 4 from Petunia hybrida (Petunia).